The chain runs to 107 residues: Thiosulfate sulfurtransferase GlpE (107 aa).

One can recognise a Rhodanese domain in the interval K19–K107. Residue C67 is the Cysteine persulfide intermediate of the active site.

Belongs to the GlpE family.

The protein localises to the cytoplasm. It catalyses the reaction thiosulfate + hydrogen cyanide = thiocyanate + sulfite + 2 H(+). The enzyme catalyses thiosulfate + [thioredoxin]-dithiol = [thioredoxin]-disulfide + hydrogen sulfide + sulfite + 2 H(+). Its function is as follows. Transferase that catalyzes the transfer of sulfur from thiosulfate to thiophilic acceptors such as cyanide or dithiols. May function in a CysM-independent thiosulfate assimilation pathway by catalyzing the conversion of thiosulfate to sulfite, which can then be used for L-cysteine biosynthesis. The sequence is that of Thiosulfate sulfurtransferase GlpE from Aliivibrio salmonicida (strain LFI1238) (Vibrio salmonicida (strain LFI1238)).